A 1508-amino-acid chain; its full sequence is ABC-type transporter oblD (1508 aa).

2 disordered regions span residues 1 to 35 (MSLG…LTNN) and 54 to 82 (KYTQ…PNGG). Residues 11-24 (TPNSVMPSDASLHN) show a composition bias toward polar residues. Residues N24 and N35 are each glycosylated (N-linked (GlcNAc...) asparagine). Positions 55–68 (YTQNSVYSTTSQNP) are enriched in polar residues. N-linked (GlcNAc...) asparagine glycosylation is found at N83, N231, and N314. In terms of domain architecture, ABC transporter 1 spans 136–390 (LEAVGLVRKL…FLNMGFVCPD (255 aa)). Helical transmembrane passes span 501–521 (ITIS…SMFF), 536–556 (LLFF…LTLY), 610–630 (GNFF…SMFF), 643–663 (ALPF…FTIP), and 752–772 (GIIF…SDFI). In terms of domain architecture, ABC transporter 2 spans 828–1070 (FQWKDICYDI…ILIDYFTRNG (243 aa)). 864–871 (GVSGAGKT) provides a ligand contact to ATP. A run of 4 helical transmembrane segments spans residues 1172–1192 (YIYS…FSLY), 1206–1226 (FAIF…MPHF), 1296–1316 (LFVW…IAAL), and 1322–1342 (AGNM…ILTT). An N-linked (GlcNAc...) asparagine glycan is attached at N1390. The chain crosses the membrane as a helical span at residues 1443-1463 (FGLMWVFVVFNAFAACGLYYW).

It belongs to the ABC transporter superfamily. ABCG family. PDR (TC 3.A.1.205) subfamily.

The protein localises to the cell membrane. In terms of biological role, ABC-type transporter; part of the gene cluster that mediates the biosynthesis of the sesterterpenes ophiobolins, fungal phytotoxins with potential anti-cancer activities. Acts as a specific transporter involved in ophiobolins secretion. The polypeptide is ABC-type transporter oblD (Cochliobolus heterostrophus (strain C5 / ATCC 48332 / race O) (Southern corn leaf blight fungus)).